A 93-amino-acid polypeptide reads, in one-letter code: Integration host factor subunit beta (93 aa).

This sequence belongs to the bacterial histone-like protein family. Heterodimer of an alpha and a beta chain.

This protein is one of the two subunits of integration host factor, a specific DNA-binding protein that functions in genetic recombination as well as in transcriptional and translational control. The chain is Integration host factor subunit beta from Haemophilus ducreyi (strain 35000HP / ATCC 700724).